Here is a 216-residue protein sequence, read N- to C-terminus: ATP phosphoribosyltransferase (216 aa).

Belongs to the ATP phosphoribosyltransferase family. Short subfamily. Heteromultimer composed of HisG and HisZ subunits.

The protein localises to the cytoplasm. The enzyme catalyses 1-(5-phospho-beta-D-ribosyl)-ATP + diphosphate = 5-phospho-alpha-D-ribose 1-diphosphate + ATP. The protein operates within amino-acid biosynthesis; L-histidine biosynthesis; L-histidine from 5-phospho-alpha-D-ribose 1-diphosphate: step 1/9. In terms of biological role, catalyzes the condensation of ATP and 5-phosphoribose 1-diphosphate to form N'-(5'-phosphoribosyl)-ATP (PR-ATP). Has a crucial role in the pathway because the rate of histidine biosynthesis seems to be controlled primarily by regulation of HisG enzymatic activity. This chain is ATP phosphoribosyltransferase, found in Rubrobacter xylanophilus (strain DSM 9941 / JCM 11954 / NBRC 16129 / PRD-1).